Consider the following 693-residue polypeptide: Follicle-stimulating hormone receptor (693 aa).

Positions 1 to 18 (MFLVFTCSLILLASCSSC) are cleaved as a signal peptide. 2 cysteine pairs are disulfide-bonded: C18/C25 and C23/C32. Residues 19 to 46 (QHHTCHCAGRIFICQESKVVQLPRDIPT) form the LRRNT domain. Over 19–366 (QHHTCHCAGR…EDIMGYTILR (348 aa)) the chain is Extracellular. A glycan (N-linked (GlcNAc...) asparagine) is linked at N47. 9 LRR repeats span residues 49 to 72 (TELR…LLDL), 73 to 97 (EKIE…LPKL), 98 to 118 (HEIR…AFQH), 119 to 143 (LPSL…KVHS), 144 to 169 (FQKV…MGLS), 170 to 192 (SESV…AFNG), 193 to 216 (TYLD…VFQG), 217 to 240 (ANGP…GLEL), and 241 to 259 (IKKL…PDLS). Residues N191 and N199 are each glycosylated (N-linked (GlcNAc...) asparagine). The N-linked (GlcNAc...) asparagine glycan is linked to N268. 4 cysteine pairs are disulfide-bonded: C275–C346, C276–C292, C276–C356, and C292–C338. Residues 367-387 (VLIWFISILAITGNIVVLIIL) traverse the membrane as a helical segment. At 388 to 398 (ISSQYKLTVPR) the chain is on the cytoplasmic side. The helical transmembrane segment at 399 to 421 (FLMCNLAFADLCIGIYLLFIASV) threads the bilayer. The Extracellular segment spans residues 422–443 (DIQTKSQYYNYAIDWQTGAGCN). C442 and C517 are disulfide-bonded. The chain crosses the membrane as a helical span at residues 444–465 (AAGFFTVFASELSVYTLTVITL). Residues 466–485 (ERWHTITYAMQLDRKVRFRH) lie on the Cytoplasmic side of the membrane. Residues 486–508 (AVIIMIFGWMFAFTVALLPIFGV) form a helical membrane-spanning segment. At 509 to 528 (SSYMKVSICLPMDIETPFSQ) the chain is on the extracellular side. A helical membrane pass occupies residues 529-550 (AYVIFLLVLNVLAFVIICACYI). Residues 551–573 (CIYFTVRNPNVISSNSDTKIAKR) lie on the Cytoplasmic side of the membrane. A helical membrane pass occupies residues 574-597 (MAILIFTDFLCMAPISFFAISASL). The Extracellular segment spans residues 598 to 608 (KVPLITVSKSK). A helical transmembrane segment spans residues 609–630 (ILLVLFYPINSCANPFLYAIFT). Topologically, residues 631 to 693 (KTFRRDFFIL…YSLVPLNHLN (63 aa)) are cytoplasmic.

Belongs to the G-protein coupled receptor 1 family. FSH/LSH/TSH subfamily. As to quaternary structure, homotrimer. Functions as a homotrimer binding the FSH hormone heterodimer composed of CGA and FSHB.

It is found in the cell membrane. Its function is as follows. G protein-coupled receptor for follitropin, the follicle-stimulating hormone. Through cAMP production activates the downstream PI3K-AKT and ERK1/ERK2 signaling pathways. This Cairina moschata (Muscovy duck) protein is Follicle-stimulating hormone receptor (FSHR).